A 230-amino-acid chain; its full sequence is Tol-Pal system protein TolQ (230 aa).

3 helical membrane-spanning segments follow: residues 16-36, 139-159, and 171-191; these read LVKLIMLILIGFSIASWAIII, YIGLFGTVWGIMHAFIALGAV, and IAEALIATAIGLFAAIPAVMA.

This sequence belongs to the ExbB/TolQ family. As to quaternary structure, the Tol-Pal system is composed of five core proteins: the inner membrane proteins TolA, TolQ and TolR, the periplasmic protein TolB and the outer membrane protein Pal. They form a network linking the inner and outer membranes and the peptidoglycan layer.

Its subcellular location is the cell inner membrane. Part of the Tol-Pal system, which plays a role in outer membrane invagination during cell division and is important for maintaining outer membrane integrity. Required, with TolR, for the proton motive force-dependent activation of TolA and for TolA-Pal interaction. In Escherichia coli O157:H7, this protein is Tol-Pal system protein TolQ.